Here is a 486-residue protein sequence, read N- to C-terminus: UDP-N-acetylmuramoyl-L-alanyl-D-glutamate--2,6-diaminopimelate ligase (486 aa).

Serine 34 is a UDP-N-acetyl-alpha-D-muramoyl-L-alanyl-D-glutamate binding site. 112–118 (GTAGKTS) contacts ATP. Residues 154–155 (TT), serine 181, glutamine 187, and arginine 189 each bind UDP-N-acetyl-alpha-D-muramoyl-L-alanyl-D-glutamate. At lysine 221 the chain carries N6-carboxylysine. Residues arginine 385, 409 to 412 (DNPR), glycine 457, and glutamate 461 each bind meso-2,6-diaminopimelate. Positions 409–412 (DNPR) match the Meso-diaminopimelate recognition motif motif.

Belongs to the MurCDEF family. MurE subfamily. It depends on Mg(2+) as a cofactor. Carboxylation is probably crucial for Mg(2+) binding and, consequently, for the gamma-phosphate positioning of ATP.

Its subcellular location is the cytoplasm. It carries out the reaction UDP-N-acetyl-alpha-D-muramoyl-L-alanyl-D-glutamate + meso-2,6-diaminopimelate + ATP = UDP-N-acetyl-alpha-D-muramoyl-L-alanyl-gamma-D-glutamyl-meso-2,6-diaminopimelate + ADP + phosphate + H(+). The protein operates within cell wall biogenesis; peptidoglycan biosynthesis. In terms of biological role, catalyzes the addition of meso-diaminopimelic acid to the nucleotide precursor UDP-N-acetylmuramoyl-L-alanyl-D-glutamate (UMAG) in the biosynthesis of bacterial cell-wall peptidoglycan. In Rhizobium meliloti (strain 1021) (Ensifer meliloti), this protein is UDP-N-acetylmuramoyl-L-alanyl-D-glutamate--2,6-diaminopimelate ligase.